We begin with the raw amino-acid sequence, 310 residues long: Oxygen-dependent coproporphyrinogen-III oxidase (310 aa).

Substrate is bound at residue serine 97. 2 residues coordinate a divalent metal cation: histidine 101 and histidine 111. The active-site Proton donor is the histidine 111. A substrate-binding site is contributed by 113–115; the sequence is NFR. A divalent metal cation-binding residues include histidine 150 and histidine 180. The segment at 245-280 is important for dimerization; that stretch reads YVEFNLLYDRGTRFGLEFGGRTESILMSLPPRVVWR. 263–265 provides a ligand contact to substrate; that stretch reads GGR.

This sequence belongs to the aerobic coproporphyrinogen-III oxidase family. Homodimer. A divalent metal cation serves as cofactor.

It localises to the cytoplasm. The enzyme catalyses coproporphyrinogen III + O2 + 2 H(+) = protoporphyrinogen IX + 2 CO2 + 2 H2O. It functions in the pathway porphyrin-containing compound metabolism; protoporphyrin-IX biosynthesis; protoporphyrinogen-IX from coproporphyrinogen-III (O2 route): step 1/1. Its function is as follows. Involved in the heme biosynthesis. Catalyzes the aerobic oxidative decarboxylation of propionate groups of rings A and B of coproporphyrinogen-III to yield the vinyl groups in protoporphyrinogen-IX. This Coxiella burnetii (strain RSA 331 / Henzerling II) protein is Oxygen-dependent coproporphyrinogen-III oxidase.